We begin with the raw amino-acid sequence, 230 residues long: Intracellular hyphae protein 1 (230 aa).

The first 18 residues, 1–18, serve as a signal peptide directing secretion; that stretch reads MQTSFVALLAVAASLASA. The segment at 20–102 is disordered; sequence PHGGNSYEAS…KNNTLPVPTC (83 aa). Repeat copies occupy residues 30–33, 36–39, 42–45, 46–49, 50–53, 57–60, 65–68, 76–79, 80–83, and 84–87. The 5 X 4 AA repeats of L-P-E-P stretch occupies residues 30 to 87; it reads LPEPTNLPEPTKLPEPVEGPYKPKPPILPEPIKDNYKPKTPILPEHVEGPYKPKLPEP. Positions 46–87 are 2 X 4 AA repeats of V-E-G-P; the sequence is VEGPYKPKPPILPEPIKDNYKPKTPILPEHVEGPYKPKLPEP. Residues 50–83 are 3 X 4 AA repeats of Y-K-P-K; the sequence is YKPKPPILPEPIKDNYKPKTPILPEHVEGPYKPK. A compositionally biased stretch (basic and acidic residues) spans 74 to 84; the sequence is EHVEGPYKPKL. The N-linked (GlcNAc...) asparagine glycan is linked to N94. The LysM 1 domain maps to 108–152; it reads KTHKVKSGESLTTIAEKYDTGICNIAKLNNLADPNFVDLNQDLQI. N-linked (GlcNAc...) asparagine glycosylation is present at N161. Residues 183-227 enclose the LysM 2 domain; the sequence is DIYSVVSGDTLTSIAQALQITLQSLKDANPGVVPEHLNVGQKLNV.

Forms a multimeric structure. In terms of processing, N-glycosylated and may be O-glycosylated. Expressed in penetration hyphae, infection vesicles and primary hyphae (intracellular hyphae).

It localises to the secreted. It is found in the cell wall. Functionally, may have roles in host-pathogen interaction, including establishment and maintenance of biotrophy, prevention of host recognition of the fungus and a barrier to host defense molecules. The chain is Intracellular hyphae protein 1 (CIH1) from Colletotrichum lindemuthianum (Bean anthracnose fungus).